Reading from the N-terminus, the 1209-residue chain is Major DNA-binding protein (1209 aa).

The disordered stretch occupies residues 290–312 (NAGKGSGRAQRQGDGSGSKNSAS). A zinc finger lies at 503 to 516 (CGLCNQATRPACAH). Residues 849-850 (FW) carry the Required for filament formation motif. Residues 1182-1209 (QKRSLPDDILFDMGAPPEKKSGLTFDML) are required for nuclear localization.

The protein belongs to the herpesviridae major DNA-binding protein family. Homooligomers. Forms double-helical filaments necessary for the formation of replication compartments within the host nucleus. Interacts with the origin-binding protein. Interacts with the helicase primase complex; this interaction stimulates primer synthesis activity of the helicase-primase complex. Interacts with the DNA polymerase. Interacts with the alkaline exonuclease; this interaction increases its nuclease processivity.

It localises to the host nucleus. Its function is as follows. Plays several crucial roles in viral infection. Participates in the opening of the viral DNA origin to initiate replication by interacting with the origin-binding protein. May disrupt loops, hairpins and other secondary structures present on ssDNA to reduce and eliminate pausing of viral DNA polymerase at specific sites during elongation. Promotes viral DNA recombination by performing strand-transfer, characterized by the ability to transfer a DNA strand from a linear duplex to a complementary single-stranded DNA circle. Can also catalyze the renaturation of complementary single strands. Additionally, reorganizes the host cell nucleus, leading to the formation of prereplicative sites and replication compartments. This process is driven by the protein which can form double-helical filaments in the absence of DNA. This chain is Major DNA-binding protein, found in Equine herpesvirus 1 (strain V592) (EHV-1).